Consider the following 673-residue polypeptide: Glycine--tRNA ligase beta subunit (673 aa).

Belongs to the class-II aminoacyl-tRNA synthetase family. In terms of assembly, tetramer of two alpha and two beta subunits.

It localises to the cytoplasm. It carries out the reaction tRNA(Gly) + glycine + ATP = glycyl-tRNA(Gly) + AMP + diphosphate. The sequence is that of Glycine--tRNA ligase beta subunit from Lactococcus lactis subsp. cremoris (strain MG1363).